The following is a 224-amino-acid chain: Flagellar L-ring protein (224 aa).

The first 15 residues, 1–15 (MARYLVLAVALLLAA), serve as a signal peptide directing secretion. Residue Cys16 is the site of N-palmitoyl cysteine attachment. Residue Cys16 is the site of S-diacylglycerol cysteine attachment.

It belongs to the FlgH family. The basal body constitutes a major portion of the flagellar organelle and consists of four rings (L,P,S, and M) mounted on a central rod.

It localises to the cell outer membrane. The protein localises to the bacterial flagellum basal body. Its function is as follows. Assembles around the rod to form the L-ring and probably protects the motor/basal body from shearing forces during rotation. The sequence is that of Flagellar L-ring protein from Shewanella baltica (strain OS185).